We begin with the raw amino-acid sequence, 101 residues long: MSIMKPTTRFFRFNSLELAVSPFQRIYGQLRFLRKQPKPFLVKLLNNEVSKLGRQGDVVSVTRGYYRNTLFPKKQAIAVDALKSMKAHLLQGSEFSTKTKE.

A mitochondrion-targeting transit peptide spans 1–32; sequence MSIMKPTTRFFRFNSLELAVSPFQRIYGQLRF.

This sequence belongs to the bacterial ribosomal protein bL9 family. Component of the mitochondrial large ribosomal subunit (mt-LSU). Mature yeast 74S mitochondrial ribosomes consist of a small (37S) and a large (54S) subunit. The 37S small subunit contains a 15S ribosomal RNA (15S mt-rRNA) and at least 32 different proteins. The 54S large subunit contains a 21S rRNA (21S mt-rRNA) and at least 45 different proteins.

It is found in the mitochondrion. Component of the mitochondrial ribosome (mitoribosome), a dedicated translation machinery responsible for the synthesis of mitochondrial genome-encoded proteins, including at least some of the essential transmembrane subunits of the mitochondrial respiratory chain. The mitoribosomes are attached to the mitochondrial inner membrane and translation products are cotranslationally integrated into the membrane. The polypeptide is Large ribosomal subunit protein bL9m (Schizosaccharomyces pombe (strain 972 / ATCC 24843) (Fission yeast)).